A 146-amino-acid polypeptide reads, in one-letter code: Large ribosomal subunit protein uL15 (146 aa).

Residues 1-18 (MKLHELKPTPGSRHERNR) show a composition bias toward basic and acidic residues. Residues 1–69 (MKLHELKPTP…RLPKRGFNNP (69 aa)) are disordered. A compositionally biased stretch (gly residues) spans 42–52 (SGGGVRPGFEG).

This sequence belongs to the universal ribosomal protein uL15 family. In terms of assembly, part of the 50S ribosomal subunit.

Functionally, binds to the 23S rRNA. The protein is Large ribosomal subunit protein uL15 of Exiguobacterium sp. (strain ATCC BAA-1283 / AT1b).